A 95-amino-acid polypeptide reads, in one-letter code: Membrane protein insertion and folding monitor (95 aa).

The chain crosses the membrane as a helical span at residues 12–32; that stretch reads LFLVDFFTIILPALTAIGIAF. The tract at residues 86–89 is crucial for elongation arrest; the sequence is DEED.

The protein resides in the cell membrane. In terms of biological role, sensor protein that up-regulates translation of the secondary membrane protein insertase (MisCB/YqjG) when activity of the primary membrane protein insertase (MisCA/SpoIIIJ) is limited. Acts as a ribosome-nascent chain complex. When the primary membrane protein insertase activity or level is reduced, the membrane insertion of MifM is impaired, which induces arrest of MifM translation and unfolding of the mRNA hairpin. Unfolding leads to translation of the downstream gene, which encodes the secondary membrane protein insertase MisCB/YqjG. Translation arrest of MifM is mediated by interaction of its C-terminal domain with the ribosomal polypeptide exit tunnel. Undergoes multisite stalling, which may allow a sufficient duration of ribosomal stalling and consequently sufficient levels of MisCB/YqjG. In Bacillus subtilis (strain 168), this protein is Membrane protein insertion and folding monitor (mifM).